Consider the following 213-residue polypeptide: Flagellin A1 (213 aa).

Positions 1–10 (MFENINEDRG) are excised as a propeptide. 3 N-linked (GlcNAc...) asparagine glycosylation sites follow: asparagine 70, asparagine 115, and asparagine 172.

The protein belongs to the archaeal flagellin family. Post-translationally, glycosylated by a pentasaccharide similar to the S-layer glycoprotein, probably comprising a hexose, 2 hexuronic acids, a methyl ester of a hexuronic acid and mannose. Glycosylation is required for biosynthesis of stable flagella.

The protein localises to the archaeal flagellum. Functionally, major flagellin required for motility. Not involved in PibD-dependent surface adhesion. Much more abundant in cells compared to FlgA2. The polypeptide is Flagellin A1 (flgA1) (Haloferax volcanii (strain ATCC 29605 / DSM 3757 / JCM 8879 / NBRC 14742 / NCIMB 2012 / VKM B-1768 / DS2) (Halobacterium volcanii)).